Consider the following 339-residue polypeptide: Fructose-1,6-bisphosphatase isozyme 2 (339 aa).

The tract at residues 3–10 (DRSPFETD) is important for interaction with ALDOA. AMP is bound by residues V18 and 28–32 (TGELT). Mg(2+) is bound by residues D69 and E98. An AMP-binding site is contributed by 113-114 (KY). Residues D119, L121, and D122 each contribute to the Mg(2+) site. D122 provides a ligand contact to substrate. Position 141 (R141) interacts with AMP. The Nuclear localization signal motif lies at 204–208 (KKKGK). Position 213–216 (213–216 (NEGY)) interacts with substrate. 2 positions are modified to phosphotyrosine: Y216 and Y219. Substrate contacts are provided by residues 245-249 (YVGSM), Y265, and K275. E281 contributes to the Mg(2+) binding site.

Belongs to the FBPase class 1 family. Homotetramer. Interacts with ALDOA; the interaction blocks inhibition by physiological concentrations of AMP and reduces inhibition by Ca(2+). Interacts with alpha-actinin and F-actin. Mg(2+) is required as a cofactor.

It localises to the cell junction. It is found in the cytoplasm. The protein localises to the nucleus. The protein resides in the myofibril. Its subcellular location is the sarcomere. It localises to the z line. It carries out the reaction beta-D-fructose 1,6-bisphosphate + H2O = beta-D-fructose 6-phosphate + phosphate. It functions in the pathway carbohydrate biosynthesis; gluconeogenesis. Its activity is regulated as follows. Subject to complex allosteric regulation. The enzyme can assume an active R-state, or an inactive T-state. Intermediate conformations may exist. AMP acts as an allosteric inhibitor. Fructose 2,6-bisphosphate acts as a competitive inhibitor. Strongly inhibited by Ca(2+). Functionally, catalyzes the hydrolysis of fructose 1,6-bisphosphate to fructose 6-phosphate in the presence of divalent cations and probably participates in glycogen synthesis from carbohydrate precursors, such as lactate. The polypeptide is Fructose-1,6-bisphosphatase isozyme 2 (Fbp2) (Rattus norvegicus (Rat)).